The primary structure comprises 525 residues: NADH-quinone oxidoreductase subunit N (525 aa).

14 helical membrane passes run L26–A46, V53–L73, P90–A110, V143–A163, L167–L187, Y202–G222, L246–F266, P278–L298, P314–Q334, L341–I361, M368–V388, L411–F431, L449–V469, and P487–A507.

It belongs to the complex I subunit 2 family. As to quaternary structure, NDH-1 is composed of 14 different subunits. Subunits NuoA, H, J, K, L, M, N constitute the membrane sector of the complex.

It localises to the cell membrane. It catalyses the reaction a quinone + NADH + 5 H(+)(in) = a quinol + NAD(+) + 4 H(+)(out). In terms of biological role, NDH-1 shuttles electrons from NADH, via FMN and iron-sulfur (Fe-S) centers, to quinones in the respiratory chain. The immediate electron acceptor for the enzyme in this species is believed to be a menaquinone. Couples the redox reaction to proton translocation (for every two electrons transferred, four hydrogen ions are translocated across the cytoplasmic membrane), and thus conserves the redox energy in a proton gradient. This Parafrankia sp. (strain EAN1pec) protein is NADH-quinone oxidoreductase subunit N.